The sequence spans 95 residues: Aspartyl/glutamyl-tRNA(Asn/Gln) amidotransferase subunit C (95 aa).

Belongs to the GatC family. As to quaternary structure, heterotrimer of A, B and C subunits.

The enzyme catalyses L-glutamyl-tRNA(Gln) + L-glutamine + ATP + H2O = L-glutaminyl-tRNA(Gln) + L-glutamate + ADP + phosphate + H(+). It catalyses the reaction L-aspartyl-tRNA(Asn) + L-glutamine + ATP + H2O = L-asparaginyl-tRNA(Asn) + L-glutamate + ADP + phosphate + 2 H(+). Allows the formation of correctly charged Asn-tRNA(Asn) or Gln-tRNA(Gln) through the transamidation of misacylated Asp-tRNA(Asn) or Glu-tRNA(Gln) in organisms which lack either or both of asparaginyl-tRNA or glutaminyl-tRNA synthetases. The reaction takes place in the presence of glutamine and ATP through an activated phospho-Asp-tRNA(Asn) or phospho-Glu-tRNA(Gln). This chain is Aspartyl/glutamyl-tRNA(Asn/Gln) amidotransferase subunit C, found in Geotalea uraniireducens (strain Rf4) (Geobacter uraniireducens).